The chain runs to 938 residues: Isoleucine--tRNA ligase (938 aa).

The 'HIGH' region signature appears at 58 to 68 (PYANGSIHIGH). Position 561 (Glu561) interacts with L-isoleucyl-5'-AMP. Residues 602 to 606 (KMSKS) carry the 'KMSKS' region motif. Lys605 is an ATP binding site. Zn(2+) contacts are provided by Cys901, Cys904, Cys921, and Cys924.

It belongs to the class-I aminoacyl-tRNA synthetase family. IleS type 1 subfamily. As to quaternary structure, monomer. Zn(2+) is required as a cofactor.

Its subcellular location is the cytoplasm. The catalysed reaction is tRNA(Ile) + L-isoleucine + ATP = L-isoleucyl-tRNA(Ile) + AMP + diphosphate. Catalyzes the attachment of isoleucine to tRNA(Ile). As IleRS can inadvertently accommodate and process structurally similar amino acids such as valine, to avoid such errors it has two additional distinct tRNA(Ile)-dependent editing activities. One activity is designated as 'pretransfer' editing and involves the hydrolysis of activated Val-AMP. The other activity is designated 'posttransfer' editing and involves deacylation of mischarged Val-tRNA(Ile). This Klebsiella pneumoniae (strain 342) protein is Isoleucine--tRNA ligase.